We begin with the raw amino-acid sequence, 426 residues long: GATA type zinc finger protein asd-4 (426 aa).

The segment at 16-40 (CQNCATSTTPLWRRDEMGQVLCNAC) adopts a GATA-type zinc-finger fold. Disordered stretches follow at residues 70 to 143 (RPDL…NPHI) and 159 to 178 (PGFG…MNGE). The segment covering 104-113 (PNNPAAAARR) has biased composition (low complexity). The segment covering 128-138 (SPVSRTGTPNV) has biased composition (polar residues). Residues 182 to 292 (QTHEQLLAAN…QDNGRHKKIR (111 aa)) adopt a coiled-coil conformation. Positions 306–318 (VEPQQPEQQQPAP) are enriched in low complexity. The interval 306–426 (VEPQQPEQQQ…PVEEAPKAES (121 aa)) is disordered. The span at 335-353 (APAPAPEAAPEQAPAPAPE) shows a compositional bias: pro residues. Residues 354 to 419 (PVQEQAQEPE…SEPPTTAPVE (66 aa)) are compositionally biased toward low complexity.

In terms of assembly, homotetramer.

The protein resides in the nucleus. In terms of biological role, transcriptional regulator that functions in sexual development; disruption of asd-4 gene results in agenesis of ascus and ascospore with macroscopically normal fruiting body formation. The GATA-type zinc finger domain binds to DNA sequences from its own promoter region. This is GATA type zinc finger protein asd-4 (asd-4) from Neurospora crassa (strain ATCC 24698 / 74-OR23-1A / CBS 708.71 / DSM 1257 / FGSC 987).